A 241-amino-acid chain; its full sequence is MRTLFIGDLHLSADRLDITQAFTHFLDTELDDADALYILGDLFEVWVGDDIAAPFALELANKLKQVSLKLPVYFIHGNRDFMLGKQFARAAGMQILPEVTCLNLYGVKTVILHGDSLCTLDKAYQRFRKLRSLALARWLYGCLSKKTRQGIADNIRSKSKSSNKHKSYTIMDVEPNAVNALLARTHAQYMIHGHTHRPAIHQLDNGCKRIVVGDWYQQGSVLSVSPQGIDLQSLPFSPQQD.

Asp8, His10, Asp41, Asn78, and His113 together coordinate Mn(2+). 78–79 (NR) is a binding site for substrate. 5 residues coordinate substrate: Asp121, Ser159, Asn163, Lys166, and His194. Residues His194 and His196 each contribute to the Mn(2+) site.

This sequence belongs to the LpxH family. Mn(2+) is required as a cofactor.

Its subcellular location is the cell inner membrane. The catalysed reaction is UDP-2-N,3-O-bis[(3R)-3-hydroxytetradecanoyl]-alpha-D-glucosamine + H2O = 2-N,3-O-bis[(3R)-3-hydroxytetradecanoyl]-alpha-D-glucosaminyl 1-phosphate + UMP + 2 H(+). It participates in glycolipid biosynthesis; lipid IV(A) biosynthesis; lipid IV(A) from (3R)-3-hydroxytetradecanoyl-[acyl-carrier-protein] and UDP-N-acetyl-alpha-D-glucosamine: step 4/6. Its function is as follows. Hydrolyzes the pyrophosphate bond of UDP-2,3-diacylglucosamine to yield 2,3-diacylglucosamine 1-phosphate (lipid X) and UMP by catalyzing the attack of water at the alpha-P atom. Involved in the biosynthesis of lipid A, a phosphorylated glycolipid that anchors the lipopolysaccharide to the outer membrane of the cell. In Shewanella putrefaciens (strain CN-32 / ATCC BAA-453), this protein is UDP-2,3-diacylglucosamine hydrolase.